The following is a 783-amino-acid chain: Cation/H(+) antiporter 11 (783 aa).

Helical transmembrane passes span 31-51 (VVFGYSLPLLEIQIILIFFCI), 61-81 (IGVSQIVSYMIAGLILGPQLF), 101-120 (AALRCISVFGRLMFTFLMTV), 135-155 (VVIGIVSFFAPLFSLSFLNLF), 175-195 (VIVITQSQILLPSTTYILLEL), 205-225 (LALSASAINDMLGIFAMIVAT), 244-264 (AVIIFFLIVFFVFKPMVQWII), 276-295 (IYIHAVILTAFASAAYFVFF), 300-322 (VLGPLIIGIIIPEGPPLGSALEA), 360-380 (IFLTLLILVIKLVACLTLCLY), 389-409 (LAVSLILSYKSFVEFVLYEAV), and 418-438 (ATYAFLILYSLLSAGIVPMVV).

It belongs to the monovalent cation:proton antiporter 2 (CPA2) transporter (TC 2.A.37) family. CHX (TC 2.A.37.4) subfamily. Specifically expressed in pollen.

The protein resides in the membrane. May operate as a cation/H(+) antiporter. This Arabidopsis thaliana (Mouse-ear cress) protein is Cation/H(+) antiporter 11 (CHX11).